The following is a 408-amino-acid chain: S-adenosylmethionine sensor upstream of mTORC1 (408 aa).

Over residues 1-16 (MEAAPRSRPRPGGAAA) the composition is skewed to low complexity. The interval 1 to 37 (MEAAPRSRPRPGGAAASPPPPPPPPPPEQERKLEQEK) is disordered. Residues 17–27 (SPPPPPPPPPP) are compositionally biased toward pro residues. Residues 28 to 37 (EQERKLEQEK) are compositionally biased toward basic and acidic residues. 6 residues coordinate S-adenosyl-L-methionine: Arg-97, Gly-175, Asp-193, Asp-205, Phe-206, and Ser-247.

This sequence belongs to the BMT2/SAMTOR family. In terms of assembly, interacts with the GATOR1 complex; interaction is disrupted when SAMTOR binds S-adenosyl-L-methionine. Interacts with the KICSTOR complex; interaction is disrupted when SAMTOR binds S-adenosyl-L-methionine.

S-adenosyl-L-methionine-binding protein that acts as an inhibitor of mTORC1 signaling via interaction with the GATOR1 and KICSTOR complexes. Acts as a sensor of S-adenosyl-L-methionine to signal methionine sufficiency to mTORC1: in presence of methionine, binds S-adenosyl-L-methionine, leading to disrupt interaction with the GATOR1 and KICSTOR complexes and promote mTORC1 signaling. Upon methionine starvation, S-adenosyl-L-methionine levels are reduced, thereby promoting the association with GATOR1 and KICSTOR, leading to inhibit mTORC1 signaling. Probably also acts as a S-adenosyl-L-methionine-dependent methyltransferase. This Gallus gallus (Chicken) protein is S-adenosylmethionine sensor upstream of mTORC1.